A 212-amino-acid chain; its full sequence is Adenylate kinase (212 aa).

10–15 (GAGKGT) serves as a coordination point for ATP. The NMP stretch occupies residues 30 to 59 (STGDMFRAAMANQTEMGRLAKSYIDKGELV). Residues threonine 31, arginine 36, 57-59 (ELV), 86-89 (GYPR), and glutamine 93 each bind AMP. Positions 127-159 (GRIINRKTGETFHKVFNPPVDYKEEDYYQREDD) are LID. ATP contacts are provided by residues arginine 128 and 137–138 (TF). Positions 156 and 167 each coordinate AMP. Glutamine 195 lines the ATP pocket.

The protein belongs to the adenylate kinase family. As to quaternary structure, monomer.

The protein localises to the cytoplasm. The enzyme catalyses AMP + ATP = 2 ADP. The protein operates within purine metabolism; AMP biosynthesis via salvage pathway; AMP from ADP: step 1/1. Its function is as follows. Catalyzes the reversible transfer of the terminal phosphate group between ATP and AMP. Plays an important role in cellular energy homeostasis and in adenine nucleotide metabolism. The polypeptide is Adenylate kinase (Streptococcus agalactiae serotype III (strain NEM316)).